Consider the following 105-residue polypeptide: MVKSVGNLADFEAELKAAGEKLVVVDFSATWCGPCKMIKPFFHSLCDKFGDVVFIEIDVDDAQDVATHCDVKCMPTFQFYKNGKKVQEFSGANKEKLEETIKSLV.

The 104-residue stretch at 2–105 folds into the Thioredoxin domain; that stretch reads VKSVGNLADF…KLEETIKSLV (104 aa). Residues Cys-32 and Cys-35 each act as nucleophile in the active site. Cys-32 and Cys-35 are disulfide-bonded. 2 positions are modified to S-nitrosocysteine: Cys-69 and Cys-73.

Belongs to the thioredoxin family. In terms of processing, may be nitrosylated on several cysteine residues, depending on the oxidation state. Nitrosylated Cys-73 may serve as donor for nitrosylation of target proteins.

The protein resides in the nucleus. The protein localises to the cytoplasm. It localises to the secreted. Participates in various redox reactions through the reversible oxidation of its active center dithiol to a disulfide and catalyzes dithiol-disulfide exchange reactions. Plays a role in the reversible S-nitrosylation of cysteine residues in target proteins, and thereby contributes to the response to intracellular nitric oxide. Nitrosylates the active site Cys of CASP3 in response to nitric oxide (NO), and thereby inhibits caspase-3 activity. Induces the FOS/JUN AP-1 DNA binding activity in ionizing radiation (IR) cells through its oxidation/reduction status and stimulates AP-1 transcriptional activity. The chain is Thioredoxin (TXN) from Gallus gallus (Chicken).